Consider the following 255-residue polypeptide: F-box only protein 44 (255 aa).

In terms of domain architecture, F-box spans 3 to 50; it reads VGNINELPENILLELFIHIPARQLLLRCRPVCSLWRDLIDLVTLWKRK. Positions 71-252 constitute an FBA domain; the sequence is FYFLRSLQRN…VTNSSITIGP (182 aa).

As to quaternary structure, part of a SCF (SKP1-cullin-F-box) protein ligase complex. Interacts with SKP1 and CUL1. In terms of tissue distribution, expressed in brain, liver, pancreas and adipose tissue (at protein level). Widely expressed.

In terms of biological role, substrate-recognition component of the SCF (SKP1-CUL1-F-box protein)-type E3 ubiquitin ligase complex. The sequence is that of F-box only protein 44 (Fbxo44) from Mus musculus (Mouse).